The following is a 289-amino-acid chain: Shikimate dehydrogenase (NADP(+)) (289 aa).

Residues 19 to 21 and Thr-66 each bind shikimate; that span reads SLS. Residue Lys-70 is the Proton acceptor of the active site. Positions 91 and 106 each coordinate shikimate. NADP(+) is bound by residues 131–135 and Leu-229; that span reads GNGGA. Tyr-231 provides a ligand contact to shikimate. Residue Gly-252 coordinates NADP(+).

Belongs to the shikimate dehydrogenase family. As to quaternary structure, homodimer.

It catalyses the reaction shikimate + NADP(+) = 3-dehydroshikimate + NADPH + H(+). It functions in the pathway metabolic intermediate biosynthesis; chorismate biosynthesis; chorismate from D-erythrose 4-phosphate and phosphoenolpyruvate: step 4/7. In terms of biological role, involved in the biosynthesis of the chorismate, which leads to the biosynthesis of aromatic amino acids. Catalyzes the reversible NADPH linked reduction of 3-dehydroshikimate (DHSA) to yield shikimate (SA). The chain is Shikimate dehydrogenase (NADP(+)) from Trichormus variabilis (strain ATCC 29413 / PCC 7937) (Anabaena variabilis).